Reading from the N-terminus, the 232-residue chain is Ashwin (232 aa).

5 positions are modified to phosphoserine: Ser112, Ser182, Ser184, Ser189, and Ser193. Positions 163–232 (KMEHNNNDTQ…KRKIQHVTWP (70 aa)) are disordered. A phosphothreonine mark is found at Thr197 and Thr198. Residues 206-224 (APKEEAEATNHLKPPEVKR) show a composition bias toward basic and acidic residues.

This sequence belongs to the ashwin family. In terms of assembly, component of the tRNA-splicing ligase complex.

It is found in the nucleus. This chain is Ashwin, found in Mus musculus (Mouse).